A 203-amino-acid polypeptide reads, in one-letter code: uncharacterized protein (203 aa).

3 helical membrane passes run 60–80, 114–134, and 157–177; these read IIDMILGAVTISLVIIVFFLY, WFQLKYLLLVSMTAFSFYFCT, and LQLGWICTTALLFYFYDALIL. Residue 192-199 coordinates ATP; the sequence is GAMSEGKT.

Its subcellular location is the membrane. This is an uncharacterized protein from Saccharomyces cerevisiae (strain ATCC 204508 / S288c) (Baker's yeast).